A 127-amino-acid chain; its full sequence is Holo-[acyl-carrier-protein] synthase (127 aa).

Positions 9 and 58 each coordinate Mg(2+).

Belongs to the P-Pant transferase superfamily. AcpS family. It depends on Mg(2+) as a cofactor.

The protein localises to the cytoplasm. The enzyme catalyses apo-[ACP] + CoA = holo-[ACP] + adenosine 3',5'-bisphosphate + H(+). Functionally, transfers the 4'-phosphopantetheine moiety from coenzyme A to a Ser of acyl-carrier-protein. This Shewanella baltica (strain OS185) protein is Holo-[acyl-carrier-protein] synthase.